The following is a 276-amino-acid chain: Undecaprenyl-diphosphatase (276 aa).

The next 7 helical transmembrane spans lie at 48 to 68 (AANS…AIVF), 92 to 112 (LTIA…FLFE), 119 to 139 (LFSV…MLIA), 155 to 175 (ITYK…WPGF), 196 to 216 (ADFT…LKLV), 229 to 249 (FFLV…KFFL), and 255 to 275 (IKLV…IMLV).

It belongs to the UppP family.

It localises to the cell membrane. The catalysed reaction is di-trans,octa-cis-undecaprenyl diphosphate + H2O = di-trans,octa-cis-undecaprenyl phosphate + phosphate + H(+). Functionally, catalyzes the dephosphorylation of undecaprenyl diphosphate (UPP). Confers resistance to bacitracin. This chain is Undecaprenyl-diphosphatase, found in Bacillus velezensis (strain DSM 23117 / BGSC 10A6 / LMG 26770 / FZB42) (Bacillus amyloliquefaciens subsp. plantarum).